The chain runs to 182 residues: Inner membrane-spanning protein YciB (182 aa).

5 consecutive transmembrane segments (helical) span residues 22 to 42, 53 to 73, 76 to 96, 121 to 141, and 149 to 169; these read IYAA…VVWV, ITLV…NEAF, WKVT…QFLF, FSWG…AFYL, and FKVF…GIYI.

This sequence belongs to the YciB family.

It is found in the cell inner membrane. Plays a role in cell envelope biogenesis, maintenance of cell envelope integrity and membrane homeostasis. This chain is Inner membrane-spanning protein YciB, found in Tolumonas auensis (strain DSM 9187 / NBRC 110442 / TA 4).